The chain runs to 96 residues: Integration host factor subunit beta (96 aa).

Belongs to the bacterial histone-like protein family. As to quaternary structure, heterodimer of an alpha and a beta chain.

Its function is as follows. This protein is one of the two subunits of integration host factor, a specific DNA-binding protein that functions in genetic recombination as well as in transcriptional and translational control. The chain is Integration host factor subunit beta from Caulobacter vibrioides (strain ATCC 19089 / CIP 103742 / CB 15) (Caulobacter crescentus).